A 240-amino-acid polypeptide reads, in one-letter code: Proteasome subunit beta 1 (240 aa).

Positions 1–46 (MRDMTPGPDLSGPQAADEFQSDPYAPEVGELPEQSAQDSEKVNKTG) are cleaved as a propeptide — removed in mature form; by autocatalysis. The disordered stretch occupies residues 1–48 (MRDMTPGPDLSGPQAADEFQSDPYAPEVGELPEQSAQDSEKVNKTGTT). T47 acts as the Nucleophile in catalysis.

The protein belongs to the peptidase T1B family. The 20S proteasome core is composed of 14 alpha and 14 beta subunits that assemble into four stacked heptameric rings, resulting in a barrel-shaped structure. The two inner rings, each composed of seven catalytic beta subunits, are sandwiched by two outer rings, each composed of seven alpha subunits. The catalytic chamber with the active sites is on the inside of the barrel. Has a gated structure, the ends of the cylinder being occluded by the N-termini of the alpha-subunits. Is capped at one or both ends by the proteasome regulatory ATPase, PAN.

It localises to the cytoplasm. The catalysed reaction is Cleavage of peptide bonds with very broad specificity.. The formation of the proteasomal ATPase PAN-20S proteasome complex, via the docking of the C-termini of PAN into the intersubunit pockets in the alpha-rings, triggers opening of the gate for substrate entry. Interconversion between the open-gate and close-gate conformations leads to a dynamic regulation of the 20S proteasome proteolysis activity. Component of the proteasome core, a large protease complex with broad specificity involved in protein degradation. The polypeptide is Proteasome subunit beta 1 (Haloarcula marismortui (strain ATCC 43049 / DSM 3752 / JCM 8966 / VKM B-1809) (Halobacterium marismortui)).